The sequence spans 248 residues: Ribosomal RNA small subunit methyltransferase J (248 aa).

S-adenosyl-L-methionine is bound by residues 101–102, 117–118, 153–154, and Asp-171; these read RD, ER, and SS.

The protein belongs to the methyltransferase superfamily. RsmJ family.

It is found in the cytoplasm. It carries out the reaction guanosine(1516) in 16S rRNA + S-adenosyl-L-methionine = N(2)-methylguanosine(1516) in 16S rRNA + S-adenosyl-L-homocysteine + H(+). In terms of biological role, specifically methylates the guanosine in position 1516 of 16S rRNA. The chain is Ribosomal RNA small subunit methyltransferase J from Proteus mirabilis (strain HI4320).